The chain runs to 233 residues: Apoptosis regulator Bcl-2 (233 aa).

The short motif at 10 to 30 (DNREIVLKYIHYKLSQRGYDW) is the BH4 element. The segment at 32 to 86 (AGEDRPPVPPAPAPAAAPAAVAAAGASSHHRPEPPGSAAASEVPPAEGLRPAPPG) is disordered. Positions 87 to 101 (VHLALRQAGDEFSRR) match the BH3 motif. A BH1 motif is present at residues 130 to 149 (ELFRDGVNWGRIVAFFEFGG). Positions 181–196 (NWIQDNGGWDAFVELY) match the BH2 motif. A helical membrane pass occupies residues 208 to 228 (WISLKTILSLVLVGACITLGA).

Belongs to the Bcl-2 family. As to quaternary structure, forms homodimers, and heterodimers with BAX, BAD, BAK and Bcl-X(L). Heterodimerization with BAX requires intact BH1 and BH2 motifs, and is necessary for anti-apoptotic activity. Also interacts with APAF1 and RAF-1. As to expression, in adult chicken expressed, in thymus, spleen, kidney, heart, ovary and brain, with the highest levels in the thymus. In the embryo, highly levels expressed in all tissues with high levels in the bursa of Fabricius.

The protein resides in the mitochondrion outer membrane. It is found in the nucleus membrane. The protein localises to the endoplasmic reticulum membrane. Its subcellular location is the cytoplasm. Its function is as follows. Suppresses apoptosis in a variety of cell systems including factor-dependent lymphohematopoietic and neural cells. Regulates cell death by controlling the mitochondrial membrane permeability. Appears to function in a feedback loop system with caspases. Inhibits caspase activity either by preventing the release of cytochrome c from the mitochondria and/or by binding to the apoptosis-activating factor (APAF-1). This chain is Apoptosis regulator Bcl-2 (BCL2), found in Gallus gallus (Chicken).